The sequence spans 239 residues: Skn-1 dependent zygotic transcript 1 protein (239 aa).

May have a role in mesendoderm development during embryogenesis. The protein is Skn-1 dependent zygotic transcript 1 protein of Caenorhabditis briggsae.